We begin with the raw amino-acid sequence, 119 residues long: Large ribosomal subunit protein uL18 (119 aa).

It belongs to the universal ribosomal protein uL18 family. Part of the 50S ribosomal subunit; part of the 5S rRNA/L5/L18/L25 subcomplex. Contacts the 5S and 23S rRNAs.

In terms of biological role, this is one of the proteins that bind and probably mediate the attachment of the 5S RNA into the large ribosomal subunit, where it forms part of the central protuberance. The polypeptide is Large ribosomal subunit protein uL18 (Nitrosomonas europaea (strain ATCC 19718 / CIP 103999 / KCTC 2705 / NBRC 14298)).